The primary structure comprises 722 residues: Polymerase basic protein 2 (722 aa).

As to quaternary structure, the RNA polymerase is composed of three subunits: PB1, PB2 and PA.

It localises to the virion. Its subcellular location is the host nucleus. Functionally, involved in transcription initiation and cap-stealing mechanism, in which cellular capped pre-mRNA are used to generate primers for viral transcription. Binds the cap of the target pre-RNA which is subsequently cleaved by PB1. May play a role in genome replication. This chain is Polymerase basic protein 2, found in Gadus morhua (Atlantic cod).